Reading from the N-terminus, the 460-residue chain is tRNA hydroxylation protein P (460 aa).

This sequence belongs to the peptidase U32 family.

Its function is as follows. Involved in prephenate-dependent formation of 5-hydroxyuridine (ho5U) modification at position 34 in tRNAs, the first step in 5-carboxymethoxyuridine (cmo5U) biosynthesis. The polypeptide is tRNA hydroxylation protein P (Haemophilus influenzae (strain ATCC 51907 / DSM 11121 / KW20 / Rd)).